The sequence spans 1158 residues: ATP-dependent helicase/deoxyribonuclease subunit B (1158 aa).

The protein belongs to the helicase family. AddB/RexB type 2 subfamily. As to quaternary structure, heterodimer of AddA and RexB. It depends on Mg(2+) as a cofactor.

Functionally, the heterodimer acts as both an ATP-dependent DNA helicase and an ATP-dependent, dual-direction single-stranded exonuclease. Recognizes the chi site generating a DNA molecule suitable for the initiation of homologous recombination. This subunit has 5' -&gt; 3' nuclease activity but not helicase activity. The polypeptide is ATP-dependent helicase/deoxyribonuclease subunit B (Lactobacillus gasseri (strain ATCC 33323 / DSM 20243 / BCRC 14619 / CIP 102991 / JCM 1131 / KCTC 3163 / NCIMB 11718 / NCTC 13722 / AM63)).